The primary structure comprises 499 residues: 2-isopropylmalate synthase (499 aa).

A Pyruvate carboxyltransferase domain is found at 5–267 (IKIFDTTLRD…ETGINLGEIA (263 aa)). Mn(2+)-binding residues include Asp14, His202, His204, and Asn238. The segment at 391–499 (SVEVLHVISG…YLSALNRIRR (109 aa)) is regulatory domain.

It belongs to the alpha-IPM synthase/homocitrate synthase family. LeuA type 1 subfamily. Mn(2+) is required as a cofactor.

It localises to the cytoplasm. It carries out the reaction 3-methyl-2-oxobutanoate + acetyl-CoA + H2O = (2S)-2-isopropylmalate + CoA + H(+). It participates in amino-acid biosynthesis; L-leucine biosynthesis; L-leucine from 3-methyl-2-oxobutanoate: step 1/4. In terms of biological role, catalyzes the condensation of the acetyl group of acetyl-CoA with 3-methyl-2-oxobutanoate (2-ketoisovalerate) to form 3-carboxy-3-hydroxy-4-methylpentanoate (2-isopropylmalate). The polypeptide is 2-isopropylmalate synthase (Pyrococcus furiosus (strain ATCC 43587 / DSM 3638 / JCM 8422 / Vc1)).